The chain runs to 253 residues: Large ribosomal subunit protein uL4 (253 aa).

Residues 78-107 (SRAARVPHAKGGRRAHPPKPEADRSEKVNT) form a disordered region. A compositionally biased stretch (basic residues) spans 82 to 94 (RVPHAKGGRRAHP). Basic and acidic residues predominate over residues 95–107 (PKPEADRSEKVNT).

The protein belongs to the universal ribosomal protein uL4 family. Part of the 50S ribosomal subunit.

Functionally, one of the primary rRNA binding proteins, this protein initially binds near the 5'-end of the 23S rRNA. It is important during the early stages of 50S assembly. It makes multiple contacts with different domains of the 23S rRNA in the assembled 50S subunit and ribosome. Its function is as follows. Forms part of the polypeptide exit tunnel. This chain is Large ribosomal subunit protein uL4, found in Methanosarcina acetivorans (strain ATCC 35395 / DSM 2834 / JCM 12185 / C2A).